We begin with the raw amino-acid sequence, 154 residues long: NAD(P)H-quinone oxidoreductase subunit N (154 aa).

The protein belongs to the complex I NdhN subunit family. As to quaternary structure, NDH-1 can be composed of about 15 different subunits; different subcomplexes with different compositions have been identified which probably have different functions.

It localises to the cellular thylakoid membrane. The catalysed reaction is a plastoquinone + NADH + (n+1) H(+)(in) = a plastoquinol + NAD(+) + n H(+)(out). It catalyses the reaction a plastoquinone + NADPH + (n+1) H(+)(in) = a plastoquinol + NADP(+) + n H(+)(out). NDH-1 shuttles electrons from an unknown electron donor, via FMN and iron-sulfur (Fe-S) centers, to quinones in the respiratory and/or the photosynthetic chain. The immediate electron acceptor for the enzyme in this species is believed to be plastoquinone. Couples the redox reaction to proton translocation, and thus conserves the redox energy in a proton gradient. Cyanobacterial NDH-1 also plays a role in inorganic carbon-concentration. The sequence is that of NAD(P)H-quinone oxidoreductase subunit N from Prochlorococcus marinus (strain NATL2A).